The chain runs to 283 residues: Xyloglucan endotransglucosylase/hydrolase 2 (283 aa).

The signal sequence occupies residues 1-30 (MAPSSAHNNGFYVLMLVGIVVSTMVATCAG). Residues 31 to 220 (SFYQDFDLTW…WSKAPFTAYY (190 aa)) form the GH16 domain. Glutamate 106 functions as the Nucleophile in the catalytic mechanism. Catalysis depends on glutamate 110, which acts as the Proton donor. Residue glutamate 110 participates in xyloglucan binding. A glycan (N-linked (GlcNAc...) asparagine) is linked at asparagine 114. Xyloglucan is bound by residues 123–125 (HTN), 133–135 (NRE), 199–200 (DW), glycine 204, and arginine 272. A disulfide bond links cysteine 267 and cysteine 281.

This sequence belongs to the glycosyl hydrolase 16 family. Contains at least one intrachain disulfide bond essential for its enzymatic activity. In terms of processing, N-glycosylated; not essential for its enzymatic activity.

Its subcellular location is the secreted. The protein localises to the cell wall. The protein resides in the extracellular space. It localises to the apoplast. The catalysed reaction is breaks a beta-(1-&gt;4) bond in the backbone of a xyloglucan and transfers the xyloglucanyl segment on to O-4 of the non-reducing terminal glucose residue of an acceptor, which can be a xyloglucan or an oligosaccharide of xyloglucan.. Functionally, catalyzes xyloglucan endohydrolysis (XEH) and/or endotransglycosylation (XET). Cleaves and religates xyloglucan polymers, an essential constituent of the primary cell wall, and thereby participates in cell wall construction of growing tissues. The polypeptide is Xyloglucan endotransglucosylase/hydrolase 2 (Glycine max (Soybean)).